An 89-amino-acid chain; its full sequence is Small ribosomal subunit protein uS15 (89 aa).

Residues 1-11 (MSITAERKAEV) show a composition bias toward basic and acidic residues. A disordered region spans residues 1–25 (MSITAERKAEVIKTNARKSGDTGSP).

It belongs to the universal ribosomal protein uS15 family. In terms of assembly, part of the 30S ribosomal subunit. Forms a bridge to the 50S subunit in the 70S ribosome, contacting the 23S rRNA.

In terms of biological role, one of the primary rRNA binding proteins, it binds directly to 16S rRNA where it helps nucleate assembly of the platform of the 30S subunit by binding and bridging several RNA helices of the 16S rRNA. Forms an intersubunit bridge (bridge B4) with the 23S rRNA of the 50S subunit in the ribosome. This is Small ribosomal subunit protein uS15 from Nitrobacter hamburgensis (strain DSM 10229 / NCIMB 13809 / X14).